The sequence spans 417 residues: MAAPGSARRPLLLLLLLLLLGLMHCASAAMFMVKNGNGTACIMANFSAAFSVNYDTKSGPKNMTFDLPSDATVVLNRSSCGKENTSDPSLVIAFGRGHTLTLNFTRNATRYSVQLMSFVYNLSDTHLFPNASSKEIKTVESITDIRADIDKKYRCVSGTQVHMNNVTVTLHDATIQAYLSNSSFSRGETRCEQDRPSPTTAPPAPPSPSPSPVPKSPSVDKYNVSGTNGTCLLASMGLQLNLTYERKDNTTVTRLLNINPNKTSASGSCGAHLVTLELHSEGTTVLLFQFGMNASSSRFFLQGIQLNTILPDARDPAFKAANGSLRALQATVGNSYKCNAEEHVRVTKAFSVNIFKVWVQAFKVEGGQFGSVEECLLDENSMLIPIAVGGALAGLVLIVLIAYLVGRKRSHAGYQTI.

The N-terminal stretch at 1-28 is a signal peptide; sequence MAAPGSARRPLLLLLLLLLLGLMHCASA. The segment at 29 to 194 is first lumenal domain; that stretch reads AMFMVKNGNG…SRGETRCEQD (166 aa). Topologically, residues 29–382 are lumenal; that stretch reads AMFMVKNGNG…EECLLDENSM (354 aa). Asn-37 and Asn-45 each carry an N-linked (GlcNAc...) asparagine glycan. Cys-41 and Cys-80 are oxidised to a cystine. A glycan (N-linked (GlcNAc...) (polylactosaminoglycan) asparagine) is linked at Asn-62. Asn-76, Asn-84, Asn-103, and Asn-107 each carry an N-linked (GlcNAc...) asparagine glycan. N-linked (GlcNAc...) (polylactosaminoglycan) asparagine glycosylation is found at Asn-121 and Asn-130. Cys-155 and Cys-191 form a disulfide bridge. 2 N-linked (GlcNAc...) asparagine glycosylation sites follow: Asn-165 and Asn-181. Residues 184–221 form a disordered region; sequence FSRGETRCEQDRPSPTTAPPAPPSPSPSPVPKSPSVDK. The tract at residues 195–227 is hinge; it reads RPSPTTAPPAPPSPSPSPVPKSPSVDKYNVSGT. O-linked (GalNAc...) serine; partial glycosylation is present at Ser-197. O-linked (GalNAc...) threonine glycosylation is found at Thr-199 and Thr-200. The span at 199–215 shows a compositional bias: pro residues; it reads TTAPPAPPSPSPSPVPK. O-linked (GalNAc...) serine glycans are attached at residues Ser-207, Ser-209, and Ser-211. N-linked (GlcNAc...) (polylactosaminoglycan) asparagine glycosylation is found at Asn-223 and Asn-228. Positions 228 to 382 are second lumenal domain; that stretch reads NGTCLLASMG…EECLLDENSM (155 aa). Cys-231 and Cys-269 form a disulfide bridge. 5 N-linked (GlcNAc...) asparagine glycosylation sites follow: Asn-241, Asn-249, Asn-261, Asn-293, and Asn-322. Cysteines 338 and 375 form a disulfide. The chain crosses the membrane as a helical span at residues 383–410; the sequence is LIPIAVGGALAGLVLIVLIAYLVGRKRS. At 411 to 417 the chain is on the cytoplasmic side; sequence HAGYQTI.

The protein belongs to the LAMP family. As to quaternary structure, interacts with ABCB9; this interaction strongly stabilizes ABCB9 and protects ABCB9 against lysosomal degradation. Interacts with FURIN. Interacts with TMEM175; inhibiting the proton channel activity of TMEM175. (Microbial infection) Interacts with Lassa virus protein glycoprotein. In terms of assembly, (Microbial infection) Interacts with mumps virus protein F; this interaction promotes protein F cleavage by FURIN. Post-translationally, O- and N-glycosylated; some of the 18 N-linked glycans are polylactosaminoglycans. (Microbial infection) The glycosylation of Asn-76 is essential for Lassa virus entry into cells.

Its subcellular location is the lysosome membrane. The protein localises to the endosome membrane. It is found in the late endosome membrane. It localises to the cell membrane. The protein resides in the cytolytic granule membrane. Its function is as follows. Lysosomal membrane glycoprotein which plays an important role in lysosome biogenesis, lysosomal pH regulation, autophagy and cholesterol homeostasis. Acts as an important regulator of lysosomal lumen pH regulation by acting as a direct inhibitor of the proton channel TMEM175, facilitating lysosomal acidification for optimal hydrolase activity. Also plays an important role in NK-cells cytotoxicity. Mechanistically, participates in cytotoxic granule movement to the cell surface and perforin trafficking to the lytic granule. In addition, protects NK-cells from degranulation-associated damage induced by their own cytotoxic granule content. Presents carbohydrate ligands to selectins. Functionally, (Microbial infection) Acts as a receptor for Lassa virus glycoprotein. Also promotes fusion of the virus with host membrane in less acidic endosomes. In terms of biological role, (Microbial infection) Supports the FURIN-mediated cleavage of mumps virus fusion protein F by interacting with both FURIN and the unprocessed form but not the processed form of the viral protein F. The protein is Lysosome-associated membrane glycoprotein 1 of Homo sapiens (Human).